The sequence spans 289 residues: Pantothenate synthetase (289 aa).

ATP is bound at residue Met-33 to His-40. Catalysis depends on His-40, which acts as the Proton donor. Gln-64 contacts (R)-pantoate. Position 64 (Gln-64) interacts with beta-alanine. Residue Gly-155 to Asp-158 participates in ATP binding. Residue Gln-161 participates in (R)-pantoate binding. Residues Ala-184 and Leu-192–Arg-195 contribute to the ATP site.

It belongs to the pantothenate synthetase family. As to quaternary structure, homodimer.

It is found in the cytoplasm. The enzyme catalyses (R)-pantoate + beta-alanine + ATP = (R)-pantothenate + AMP + diphosphate + H(+). Its pathway is cofactor biosynthesis; (R)-pantothenate biosynthesis; (R)-pantothenate from (R)-pantoate and beta-alanine: step 1/1. Functionally, catalyzes the condensation of pantoate with beta-alanine in an ATP-dependent reaction via a pantoyl-adenylate intermediate. This chain is Pantothenate synthetase, found in Acidovorax sp. (strain JS42).